A 318-amino-acid chain; its full sequence is Ferredoxin--NADP reductase (318 aa).

Aspartate 33, glutamine 41, tyrosine 46, valine 84, phenylalanine 115, aspartate 276, and threonine 316 together coordinate FAD.

Belongs to the ferredoxin--NADP reductase type 2 family. Homodimer. FAD is required as a cofactor.

The catalysed reaction is 2 reduced [2Fe-2S]-[ferredoxin] + NADP(+) + H(+) = 2 oxidized [2Fe-2S]-[ferredoxin] + NADPH. This chain is Ferredoxin--NADP reductase, found in Lactobacillus gasseri (strain ATCC 33323 / DSM 20243 / BCRC 14619 / CIP 102991 / JCM 1131 / KCTC 3163 / NCIMB 11718 / NCTC 13722 / AM63).